The primary structure comprises 82 residues: Protein C2 (82 aa).

The sequence is that of Protein C2 (C2) from Sterkiella nova (Ciliate).